The following is a 101-amino-acid chain: Small ribosomal subunit protein uS14 (101 aa).

The disordered stretch occupies residues 1–20 (MAKISAVERNKKRERLTKRD).

It belongs to the universal ribosomal protein uS14 family. As to quaternary structure, part of the 30S ribosomal subunit. Contacts proteins S3 and S10.

In terms of biological role, binds 16S rRNA, required for the assembly of 30S particles and may also be responsible for determining the conformation of the 16S rRNA at the A site. The protein is Small ribosomal subunit protein uS14 of Rhodospirillum rubrum (strain ATCC 11170 / ATH 1.1.1 / DSM 467 / LMG 4362 / NCIMB 8255 / S1).